Reading from the N-terminus, the 398-residue chain is Steroid C26-monooxygenase (398 aa).

Residue Cys-340 coordinates heme.

The protein belongs to the cytochrome P450 family. Heme is required as a cofactor.

It catalyses the reaction cholest-4-en-3-one + 6 reduced [2Fe-2S]-[ferredoxin] + 3 O2 + 5 H(+) = (25R)-3-oxocholest-4-en-26-oate + 6 oxidized [2Fe-2S]-[ferredoxin] + 4 H2O. It carries out the reaction cholest-4-en-3-one + 2 reduced [2Fe-2S]-[ferredoxin] + O2 + 2 H(+) = (25R)-3-oxocholest-4-en-26-ol + 2 oxidized [2Fe-2S]-[ferredoxin] + H2O. The enzyme catalyses (25R)-3-oxocholest-4-en-26-ol + 2 reduced [2Fe-2S]-[ferredoxin] + O2 + 2 H(+) = (25R)-3-oxocholest-4-en-26-al + 2 oxidized [2Fe-2S]-[ferredoxin] + 2 H2O. The catalysed reaction is (25R)-3-oxocholest-4-en-26-al + 2 reduced [2Fe-2S]-[ferredoxin] + O2 + H(+) = (25R)-3-oxocholest-4-en-26-oate + 2 oxidized [2Fe-2S]-[ferredoxin] + H2O. It catalyses the reaction cholesterol + NADPH + O2 + H(+) = 26-hydroxycholesterol + NADP(+) + H2O. It carries out the reaction 26-hydroxycholesterol + 2 reduced [2Fe-2S]-[ferredoxin] + O2 + 2 H(+) = (3beta)-hydroxy-cholest-5-en-26-al + 2 oxidized [2Fe-2S]-[ferredoxin] + 2 H2O. The enzyme catalyses (3beta)-hydroxy-cholest-5-en-26-al + NADPH + O2 = (3beta)-hydroxy-cholest-5-en-26-oate + NADP(+) + H2O. The catalysed reaction is (25S)-3-oxocholest-4-en-26-ol + 2 reduced [2Fe-2S]-[ferredoxin] + O2 + 2 H(+) = (25S)-3-oxocholest-4-en-26-al + 2 oxidized [2Fe-2S]-[ferredoxin] + 2 H2O. It catalyses the reaction (25S)-3-oxocholest-4-en-26-al + 2 reduced [2Fe-2S]-[ferredoxin] + O2 + H(+) = (25S)-3-oxocholest-4-en-26-oate + 2 oxidized [2Fe-2S]-[ferredoxin] + H2O. The protein operates within steroid metabolism; cholesterol degradation. Inhibited by econazole, clotrimazole and miconazole. Functionally, involved in the utilization of cholesterol as the sole carbon and energy source by degrading the side chain during infection. Primarily catalyzes the sequential oxidation of the terminal methyl of cholest-4-en-3-one into (25R)-26-hydroxycholest-4-en-3-one (alcohol), (25R)-26-oxocholest-4-en-3-one (aldehyde), to finally yield the carboxylic acid (25R)-3-oxocholest-4-en-26-oate. In vitro, Cyp142 catalyzes with equal preference the oxidation of both (25R)- and (25S)-26-hydroxycholest-4-en-3-one diastereomers to the corresponding carboxylic acid which is a prerequisite for entry into the beta-oxidation pathway. Also able to sequentially oxidize cholesterol itself, not only cholest-4-en-3-one. This chain is Steroid C26-monooxygenase (cyp142), found in Mycobacterium tuberculosis (strain ATCC 25618 / H37Rv).